Consider the following 248-residue polypeptide: Ureidoacrylate amidohydrolase RutB (248 aa).

The active-site Proton acceptor is the Asp41. Lys150 is an active-site residue. Cys183 serves as the catalytic Nucleophile.

This sequence belongs to the isochorismatase family. RutB subfamily.

It carries out the reaction (Z)-3-ureidoacrylate + H2O + H(+) = (Z)-3-aminoacrylate + NH4(+) + CO2. The catalysed reaction is (Z)-3-ureidoacrylate + H2O = (Z)-3-aminoacrylate + carbamate + H(+). It catalyses the reaction (Z)-2-methylureidoacrylate + H2O + H(+) = (Z)-2-methylaminoacrylate + NH4(+) + CO2. Its function is as follows. Hydrolyzes ureidoacrylate to form aminoacrylate and carbamate. The carbamate hydrolyzes spontaneously, thereby releasing one of the nitrogen atoms of the pyrimidine ring as ammonia and one of its carbon atoms as CO2. The chain is Ureidoacrylate amidohydrolase RutB from Stutzerimonas stutzeri (strain A1501) (Pseudomonas stutzeri).